The primary structure comprises 351 residues: Serine protease inhibitor dipetalogastin (351 aa).

A propeptide spanning residues 1–131 (LIKELVNMVI…AETTNAMEVL (131 aa)) is cleaved from the precursor. Kazal-like domains lie at 19–69 (KELK…PCDE), 72–122 (HDFE…ECHA), 131–181 (LFQG…PCDE), 184–234 (HDFE…ECHP), 240–289 (QLIL…ECKV), and 297–347 (GEVR…RCLP). Disulfide bonds link C25–C50, C27–C46, C35–C67, C78–C103, C80–C99, C88–C120, C137–C162, C139–C158, C147–C179, C190–C215, C192–C211, C200–C232, C246–C271, C248–C267, C256–C287, C303–C328, C305–C324, and C313–C345.

It is found in the secreted. Its function is as follows. Thrombin inhibitor. Prevents blood clotting to allow insect to feed on blood. Also functions as an inhibitor of trypsin and plasmin. The protein is Serine protease inhibitor dipetalogastin of Dipetalogaster maximus (Blood-sucking bug).